Here is a 179-residue protein sequence, read N- to C-terminus: Dual-action ribosomal maturation protein DarP (179 aa).

Belongs to the DarP family.

It localises to the cytoplasm. In terms of biological role, member of a network of 50S ribosomal subunit biogenesis factors which assembles along the 30S-50S interface, preventing incorrect 23S rRNA structures from forming. Promotes peptidyl transferase center (PTC) maturation. This chain is Dual-action ribosomal maturation protein DarP, found in Aliivibrio fischeri (strain ATCC 700601 / ES114) (Vibrio fischeri).